The following is a 118-amino-acid chain: Small ribosomal subunit protein uS13 (118 aa).

Positions 94–118 are disordered; that stretch reads SLPLRGQRTKTNARTRKGPRKPIKK.

This sequence belongs to the universal ribosomal protein uS13 family. As to quaternary structure, part of the 30S ribosomal subunit. Forms a loose heterodimer with protein S19. Forms two bridges to the 50S subunit in the 70S ribosome.

Its function is as follows. Located at the top of the head of the 30S subunit, it contacts several helices of the 16S rRNA. In the 70S ribosome it contacts the 23S rRNA (bridge B1a) and protein L5 of the 50S subunit (bridge B1b), connecting the 2 subunits; these bridges are implicated in subunit movement. Contacts the tRNAs in the A and P-sites. The polypeptide is Small ribosomal subunit protein uS13 (Idiomarina loihiensis (strain ATCC BAA-735 / DSM 15497 / L2-TR)).